The following is a 101-amino-acid chain: Small ribosomal subunit protein uS14 (101 aa).

Belongs to the universal ribosomal protein uS14 family. In terms of assembly, part of the 30S ribosomal subunit. Contacts proteins S3 and S10.

In terms of biological role, binds 16S rRNA, required for the assembly of 30S particles and may also be responsible for determining the conformation of the 16S rRNA at the A site. In Chromohalobacter salexigens (strain ATCC BAA-138 / DSM 3043 / CIP 106854 / NCIMB 13768 / 1H11), this protein is Small ribosomal subunit protein uS14.